Consider the following 658-residue polypeptide: D-ornithine--citrate ligase (658 aa).

This sequence belongs to the IucA/IucC family.

The catalysed reaction is D-ornithine + citrate + ATP = N(5)-[(S)-citryl]-D-ornithine + AMP + diphosphate + H(+). It functions in the pathway siderophore biosynthesis. Its function is as follows. Involved in the biosynthesis of the siderophore staphyloferrin A. Catalyzes the ATP-dependent condensation of D-ornithine and citrate to form a citryl-D-ornithine intermediate. This is D-ornithine--citrate ligase from Staphylococcus aureus (strain NCTC 8325 / PS 47).